The following is a 335-amino-acid chain: Aspartate carbamoyltransferase catalytic subunit (335 aa).

Carbamoyl phosphate-binding residues include arginine 81 and threonine 82. Residue lysine 109 coordinates L-aspartate. 3 residues coordinate carbamoyl phosphate: arginine 131, histidine 159, and glutamine 162. Residues arginine 192 and arginine 246 each coordinate L-aspartate. 2 residues coordinate carbamoyl phosphate: glycine 287 and proline 288.

This sequence belongs to the aspartate/ornithine carbamoyltransferase superfamily. ATCase family. In terms of assembly, heterododecamer (2C3:3R2) of six catalytic PyrB chains organized as two trimers (C3), and six regulatory PyrI chains organized as three dimers (R2).

The catalysed reaction is carbamoyl phosphate + L-aspartate = N-carbamoyl-L-aspartate + phosphate + H(+). Its pathway is pyrimidine metabolism; UMP biosynthesis via de novo pathway; (S)-dihydroorotate from bicarbonate: step 2/3. Its function is as follows. Catalyzes the condensation of carbamoyl phosphate and aspartate to form carbamoyl aspartate and inorganic phosphate, the committed step in the de novo pyrimidine nucleotide biosynthesis pathway. This chain is Aspartate carbamoyltransferase catalytic subunit, found in Caulobacter sp. (strain K31).